The primary structure comprises 683 residues: MTDALLPGSLNGKRLSEQNYFRKGKSIAQTGRSKLQNQRASLNQQILKAMRMRVGAENLLRATSNNKIREQVLLELSFVNSNLQRLKEELERLNISVEVYQHTEQDSNIPLIPLGLKETKDVDFTTAFKDFISEHYSEDASEYENELADLMDLRQACRTPSRDEAGVELLVSYFQQLGYLENRFFPPSRNLGILFTWYDSFTGVPVSQPNISLEKASILFNIAALYTQIGTRCNRQTKIGLEEAVTAFQKATGVLNYLKETFTHTPSYDMSPAMLGVLIKMLLAEAHECYFEKMILSGIQNEFCTLLKAAQEAAKVGEVHMQVYTLMNQAPIKENVPYSWSVMVQVKAEHYKALANYFVAIILIDYQLSLSDDEDKQEKAISQLYDSMPEGLTAQTILKDQQQRTLLGKAHLSKAIRSHEEAIRFSTLCSTLRQIDVLQKILSAFHQRSQLKFSQHQKPDDFLDLLSAPDIVSKTEYQAKTISPQLSKDKVTDIFQRLGPLSVFSVKQRWSAPRKICITKEDGDFGFVLRGDCPVQVISLDPLCPAATEGLKEGDYIVSVAGKDCKWCSTSQVMDMLQATGKQSIEIQVISIQDQTYSMPTKSATYYAGMQKTYSLVCLTMDNVKHTKTQKATKKLSFLSWGFRNRQKAASTLCLPSEVKGKPKTDNLFSFPDNSLCSESVLY.

An REM-1 domain is found at 25–99 (KSIAQTGRSK…LERLNISVEV (75 aa)). Residues 110–501 (PLIPLGLKET…TDIFQRLGPL (392 aa)) form the BRO1 domain. In terms of domain architecture, PDZ spans 515 to 592 (KICITKEDGD…QSIEIQVISI (78 aa)).

The protein belongs to the RHPN family. As to quaternary structure, interacts with RhoA.

Its subcellular location is the cytoplasm. The protein localises to the perinuclear region. Its function is as follows. Binds specifically to GTP-Rho. In Xenopus laevis (African clawed frog), this protein is Rhophilin-2-A (rhpn2-a).